Here is a 185-residue protein sequence, read N- to C-terminus: Adenine phosphoribosyltransferase (185 aa).

Belongs to the purine/pyrimidine phosphoribosyltransferase family.

The protein resides in the cytoplasm. The catalysed reaction is AMP + diphosphate = 5-phospho-alpha-D-ribose 1-diphosphate + adenine. It participates in purine metabolism; AMP biosynthesis via salvage pathway; AMP from adenine: step 1/1. Catalyzes a salvage reaction resulting in the formation of AMP, that is energically less costly than de novo synthesis. This chain is Adenine phosphoribosyltransferase (aprt-1), found in Caenorhabditis elegans.